We begin with the raw amino-acid sequence, 299 residues long: Protease HtpX homolog (299 aa).

2 helical membrane-spanning segments follow: residues 14-34 and 39-59; these read WLLL…VGYL and GFGG…TMIF. H143 is a Zn(2+) binding site. The active site involves E144. H147 serves as a coordination point for Zn(2+). 2 helical membrane-spanning segments follow: residues 153-173 and 198-218; these read IRIS…AVMA and IILL…ATLV. Position 227 (E227) interacts with Zn(2+).

Belongs to the peptidase M48B family. Requires Zn(2+) as cofactor.

The protein resides in the cell membrane. This is Protease HtpX homolog from Streptococcus thermophilus (strain CNRZ 1066).